A 314-amino-acid chain; its full sequence is tRNA dimethylallyltransferase (314 aa).

The disordered stretch occupies residues M1–L24. G40 to S47 lines the ATP pocket. T42–S47 lines the substrate pocket.

The protein belongs to the IPP transferase family. In terms of assembly, monomer. Mg(2+) is required as a cofactor.

The catalysed reaction is adenosine(37) in tRNA + dimethylallyl diphosphate = N(6)-dimethylallyladenosine(37) in tRNA + diphosphate. Catalyzes the transfer of a dimethylallyl group onto the adenine at position 37 in tRNAs that read codons beginning with uridine, leading to the formation of N6-(dimethylallyl)adenosine (i(6)A). This chain is tRNA dimethylallyltransferase, found in Cereibacter sphaeroides (strain ATCC 17029 / ATH 2.4.9) (Rhodobacter sphaeroides).